The sequence spans 159 residues: Phosphopantetheine adenylyltransferase (159 aa).

Thr10 contributes to the substrate binding site. ATP is bound by residues 10–11 (TF) and His18. Positions 42, 74, and 88 each coordinate substrate. ATP contacts are provided by residues 89 to 91 (GLR), Glu99, and 124 to 130 (WSFISSS).

Belongs to the bacterial CoaD family. Homohexamer. The cofactor is Mg(2+).

The protein resides in the cytoplasm. The enzyme catalyses (R)-4'-phosphopantetheine + ATP + H(+) = 3'-dephospho-CoA + diphosphate. Its pathway is cofactor biosynthesis; coenzyme A biosynthesis; CoA from (R)-pantothenate: step 4/5. In terms of biological role, reversibly transfers an adenylyl group from ATP to 4'-phosphopantetheine, yielding dephospho-CoA (dPCoA) and pyrophosphate. This Salmonella typhimurium (strain LT2 / SGSC1412 / ATCC 700720) protein is Phosphopantetheine adenylyltransferase.